A 334-amino-acid chain; its full sequence is Protein NlpD/LppB homolog (334 aa).

A LysM domain is found at 89-133 (IFYIVKSKDTMYSIAKNSGYNYHELSKFNSIKKPYKIIIGQKIWM).

Belongs to the E.coli NlpD/Haemophilus LppB family.

The protein is Protein NlpD/LppB homolog of Buchnera aphidicola subsp. Acyrthosiphon pisum (strain APS) (Acyrthosiphon pisum symbiotic bacterium).